The chain runs to 329 residues: Vitamin B12 import system permease protein BtuC (329 aa).

Transmembrane regions (helical) follow at residues 18-38 (WLLS…CAGE), 64-84 (LAVL…QALF), 91-111 (PGLL…VLLG), 115-135 (LPGW…TLIL), 149-169 (LLAG…AIYF), 191-208 (WQQS…IWIC), 243-263 (GWMV…GLVI), 277-297 (VLLP…DVVA), and 305-325 (ELPI…WLLL).

The protein belongs to the binding-protein-dependent transport system permease family. FecCD subfamily. In terms of assembly, the complex is composed of two ATP-binding proteins (BtuD), two transmembrane proteins (BtuC) and a solute-binding protein (BtuF).

Its subcellular location is the cell inner membrane. Functionally, part of the ABC transporter complex BtuCDF involved in vitamin B12 import. Involved in the translocation of the substrate across the membrane. The chain is Vitamin B12 import system permease protein BtuC from Salmonella arizonae (strain ATCC BAA-731 / CDC346-86 / RSK2980).